The following is a 2102-amino-acid chain: Probable serine/threonine-protein kinase DDB_G0272282 (2102 aa).

The 118-residue stretch at 1-118 (MKYQLSILGD…NWLVPQNEPA (118 aa)) folds into the PX domain. One can recognise a PH domain in the interval 124 to 222 (NPDKSGYLIK…WIKAIELSQQ (99 aa)). Residues 225 to 240 (QDQEQYRKQEEEERQK) show a composition bias toward basic and acidic residues. Disordered stretches follow at residues 225 to 289 (QDQE…SDGS), 302 to 390 (GPNN…SDLN), 426 to 558 (EQPG…SASP), 574 to 665 (SNLP…PLPN), 685 to 768 (NNNS…NNSL), 804 to 842 (KKKE…GTLR), 1029 to 1051 (QQQQ…SSVN), 1106 to 1224 (GTPT…PQPQ), and 1476 to 1514 (SSKV…SSLT). Low complexity-rich tracts occupy residues 256–281 (STLT…LPSS) and 304–327 (NNSN…NNHN). Residues 328-348 (HYNHHNNNHNNSHHHHHHHNG) are compositionally biased toward basic residues. Composition is skewed to low complexity over residues 353–376 (SSQV…STSL) and 426–437 (EQPGSYQQPQHQ). A compositionally biased stretch (gly residues) spans 438 to 450 (QGGGGGGGGGGGN). Over residues 466-484 (SNLSSRSNSNSSGSSSGSG) the composition is skewed to low complexity. A compositionally biased stretch (gly residues) spans 485–501 (SSSGSGPIGSGGVGGGL). 2 stretches are compositionally biased toward low complexity: residues 535–558 (SNSS…SASP) and 587–626 (NANN…NNGN). Residues 627-659 (TASGSSCNTTPNLLPAPTNVSPIQNRARSSPMT) show a composition bias toward polar residues. Residues 804 to 824 (KKKEKDKEKEKDKEKEKEKEI) show a composition bias toward basic and acidic residues. Polar residues predominate over residues 827 to 841 (NISTSTTPNKKNGTL). A compositionally biased stretch (polar residues) spans 1106 to 1118 (GTPTTTSGDNTPL). Composition is skewed to low complexity over residues 1119–1182 (TNTA…NSSI), 1196–1221 (EQQQ…QQQP), and 1476–1492 (SSKV…SPIL). A compositionally biased stretch (pro residues) spans 1493–1507 (SSPPPPMKQPPPQVI). Residues 1527-1851 (FEIIKPISRG…AYEVKTHPFF (325 aa)) enclose the Protein kinase domain. ATP contacts are provided by residues 1533-1541 (ISRGAFGRV) and lysine 1556. Aspartate 1650 (proton acceptor) is an active-site residue. Low complexity-rich tracts occupy residues 1687–1729 (NTNT…SQTN), 1902–1999 (SQPQ…NINN), and 2006–2052 (NNNS…QINN). Disordered stretches follow at residues 1687–1741 (NTNT…KNTL) and 1902–2070 (SQPQ…SKIE). Residues 1852–1911 (ANVNWDTLIDQEMDNIFLPKPENNYDTDYFWDRQSMYDDEAEDDFLTINQSQPQHQSQHQ) enclose the AGC-kinase C-terminal domain.

It belongs to the protein kinase superfamily. AGC Ser/Thr protein kinase family.

The enzyme catalyses L-seryl-[protein] + ATP = O-phospho-L-seryl-[protein] + ADP + H(+). It carries out the reaction L-threonyl-[protein] + ATP = O-phospho-L-threonyl-[protein] + ADP + H(+). This is Probable serine/threonine-protein kinase DDB_G0272282 from Dictyostelium discoideum (Social amoeba).